Consider the following 458-residue polypeptide: Monomethylamine methyltransferase MtmB1 (458 aa).

Pyl202 is a non-standard amino acid (pyrrolysine).

This sequence belongs to the monomethylamine methyltransferase family. Can form a complex with MtmC.

It carries out the reaction Co(I)-[methylamine-specific corrinoid protein] + methylamine + H(+) = methyl-Co(III)-[methylamine-specific corrinoid protein] + NH4(+). It functions in the pathway one-carbon metabolism; methanogenesis from methylamine. Its function is as follows. Catalyzes the transfer of the methyl group from monomethylamine to the corrinoid cofactor of MtmC. The protein is Monomethylamine methyltransferase MtmB1 (mtmB1) of Methanosarcina acetivorans (strain ATCC 35395 / DSM 2834 / JCM 12185 / C2A).